We begin with the raw amino-acid sequence, 659 residues long: Pentatricopeptide repeat-containing protein At3g26782, mitochondrial (659 aa).

A mitochondrion-targeting transit peptide spans 1-24 (MKVRSKKALFCSVSRLLHTERHTE). PPR repeat units follow at residues 40–74 (DVFSWNSVIADLARSGDSAEALLAFSSMRKLSLYP), 75–109 (TRSSFPCAIKACSSLFDIFSGKQTHQQAFVFGYQS), 110–144 (DIFVSSALIVMYSTCGKLEDARKVFDEIPKRNIVS), 145–171 (WTSMIRGYDLNGNALDAVSLFKDLLVD), 182–216 (DSMGLVSVISACSRVPAKGLTESIHSFVIKRGFDR), 217–249 (GVSVGNTLLDAYAKGGEGGVAVARKIFDQIVDK), 250–284 (DRVSYNSIMSVYAQSGMSNEAFEVFRRLVKNKVVT), 286–320 (NAITLSTVLLAVSHSGALRIGKCIHDQVIRMGLED), 321–351 (DVIVGTSIIDMYCKCGRVETARKAFDRMKNK), 352–386 (NVRSWTAMIAGYGMHGHAAKALELFPAMIDSGVRP), 387–422 (NYITFVSVLAACSHAGLHVEGWRWFNAMKGRFGVEP), and 423–453 (GLEHYGCMVDLLGRAGFLQKAYDLIQRMKMK). The type E motif stretch occupies residues 458–533 (IWSSLLAACR…PPGFSLLELN (76 aa)). The interval 534–564 (GEVHVFLIGDEEHPQREKIYEFLAELNRKLL) is type E(+) motif. The tract at residues 565–659 (EAGYVSNTSS…DGGCSCGDYW (95 aa)) is type DYW motif.

The protein belongs to the PPR family. PCMP-H subfamily.

It is found in the mitochondrion. This chain is Pentatricopeptide repeat-containing protein At3g26782, mitochondrial (PCMP-H34), found in Arabidopsis thaliana (Mouse-ear cress).